Consider the following 306-residue polypeptide: MLQGRNLIDPMDFSVEELEEVFSLADKIIENPKKYSKVCEGKLLATLFYEPSTRTRLSFEAAMLRLGGKVLGFSDANCSSVSKGESLEDTIKIVSGYTDVIAIRHPKEGAAEVASKHSYVPIINAGDGGHQHPTQTLTDLLTIRRIKGDFSNHTIGLCGDLKFGRTVHSLVKALSRYENNKFILISPKELKIPDYIKEFLNERNIEFKEVDKLEDVIGELDILYMTRVQKERFEDKEEYIRLKDTYVLDKEKMNVAKEDMMVLHPLPRVNEISTNVDDDKRACYFKQARFGMFVRMALIAKVLGVE.

Carbamoyl phosphate is bound by residues R54 and T55. K83 serves as a coordination point for L-aspartate. Positions 104, 132, and 135 each coordinate carbamoyl phosphate. The L-aspartate site is built by R165 and R227. L266 and P267 together coordinate carbamoyl phosphate.

Belongs to the aspartate/ornithine carbamoyltransferase superfamily. ATCase family. In terms of assembly, heterododecamer (2C3:3R2) of six catalytic PyrB chains organized as two trimers (C3), and six regulatory PyrI chains organized as three dimers (R2).

It carries out the reaction carbamoyl phosphate + L-aspartate = N-carbamoyl-L-aspartate + phosphate + H(+). Its pathway is pyrimidine metabolism; UMP biosynthesis via de novo pathway; (S)-dihydroorotate from bicarbonate: step 2/3. Its function is as follows. Catalyzes the condensation of carbamoyl phosphate and aspartate to form carbamoyl aspartate and inorganic phosphate, the committed step in the de novo pyrimidine nucleotide biosynthesis pathway. In Clostridium novyi (strain NT), this protein is Aspartate carbamoyltransferase catalytic subunit.